Here is a 508-residue protein sequence, read N- to C-terminus: Transposase (508 aa).

The HTH IS21-type domain occupies 3–65 (LLSVIRRWHF…PFADRLSAWL (63 aa)). Residues 124–299 (LAFEPGEAFQ…TIADIWVEEV (176 aa)) form the Integrase catalytic domain.

It belongs to the transposase IS21/IS408/IS1162 family.

Its function is as follows. Required for the transposition of the insertion element. The protein is Transposase (nmoT) of Aminobacter aminovorans (Chelatobacter heintzii).